The chain runs to 239 residues: Carboxy-S-adenosyl-L-methionine synthase (239 aa).

Residues Tyr35, 64–66 (GSS), 114–115 (DL), Asn129, and Arg196 each bind S-adenosyl-L-methionine.

This sequence belongs to the class I-like SAM-binding methyltransferase superfamily. Cx-SAM synthase family. As to quaternary structure, homodimer.

It carries out the reaction prephenate + S-adenosyl-L-methionine = carboxy-S-adenosyl-L-methionine + 3-phenylpyruvate + H2O. In terms of biological role, catalyzes the conversion of S-adenosyl-L-methionine (SAM) to carboxy-S-adenosyl-L-methionine (Cx-SAM). This chain is Carboxy-S-adenosyl-L-methionine synthase, found in Helicobacter hepaticus (strain ATCC 51449 / 3B1).